Reading from the N-terminus, the 388-residue chain is Protein YnjB (388 aa).

The disordered stretch occupies residues 333 to 357 (AVWGDPSVLDPQKLPDGQRESLQSR).

The sequence is that of Protein YnjB (ynjB) from Escherichia coli (strain K12).